The chain runs to 72 residues: Translation initiation factor IF-1 (72 aa).

An S1-like domain is found at 1-72 (MAKSDVIEME…SKGRIVYRAR (72 aa)).

Belongs to the IF-1 family. Component of the 30S ribosomal translation pre-initiation complex which assembles on the 30S ribosome in the order IF-2 and IF-3, IF-1 and N-formylmethionyl-tRNA(fMet); mRNA recruitment can occur at any time during PIC assembly.

The protein localises to the cytoplasm. Functionally, one of the essential components for the initiation of protein synthesis. Stabilizes the binding of IF-2 and IF-3 on the 30S subunit to which N-formylmethionyl-tRNA(fMet) subsequently binds. Helps modulate mRNA selection, yielding the 30S pre-initiation complex (PIC). Upon addition of the 50S ribosomal subunit IF-1, IF-2 and IF-3 are released leaving the mature 70S translation initiation complex. This is Translation initiation factor IF-1 from Marinobacter nauticus (strain ATCC 700491 / DSM 11845 / VT8) (Marinobacter aquaeolei).